A 457-amino-acid polypeptide reads, in one-letter code: UDP-N-acetylmuramate--L-alanine ligase (457 aa).

112–118 (GTHGKTT) serves as a coordination point for ATP.

This sequence belongs to the MurCDEF family.

The protein resides in the cytoplasm. The enzyme catalyses UDP-N-acetyl-alpha-D-muramate + L-alanine + ATP = UDP-N-acetyl-alpha-D-muramoyl-L-alanine + ADP + phosphate + H(+). The protein operates within cell wall biogenesis; peptidoglycan biosynthesis. In terms of biological role, cell wall formation. The sequence is that of UDP-N-acetylmuramate--L-alanine ligase from Solidesulfovibrio magneticus (strain ATCC 700980 / DSM 13731 / RS-1) (Desulfovibrio magneticus).